A 501-amino-acid chain; its full sequence is Probable cytochrome P450 28d2 (501 aa).

Cys446 provides a ligand contact to heme.

This sequence belongs to the cytochrome P450 family. The cofactor is heme.

The protein localises to the endoplasmic reticulum membrane. It localises to the microsome membrane. Its function is as follows. May be involved in the metabolism of insect hormones and in the breakdown of synthetic insecticides. The polypeptide is Probable cytochrome P450 28d2 (Cyp28d2) (Drosophila melanogaster (Fruit fly)).